The following is a 281-amino-acid chain: Homoserine kinase (281 aa).

83–93 (PVSSGLGSSAA) lines the ATP pocket.

This sequence belongs to the GHMP kinase family. Homoserine kinase subfamily.

It localises to the cytoplasm. It carries out the reaction L-homoserine + ATP = O-phospho-L-homoserine + ADP + H(+). The protein operates within amino-acid biosynthesis; L-threonine biosynthesis; L-threonine from L-aspartate: step 4/5. In terms of biological role, catalyzes the ATP-dependent phosphorylation of L-homoserine to L-homoserine phosphate. This chain is Homoserine kinase, found in Thermotoga petrophila (strain ATCC BAA-488 / DSM 13995 / JCM 10881 / RKU-1).